The following is a 210-amino-acid chain: Keratin-associated protein 26-1 (210 aa).

It belongs to the PMG family. Interacts with hair keratins. As to expression, localized high up in the well differentiated portion of the hair follicle cuticle (about 10-15 cell layers above the apex of the dermal papilla).

Its function is as follows. In the hair cortex, hair keratin intermediate filaments are embedded in an interfilamentous matrix, consisting of hair keratin-associated proteins (KRTAP), which are essential for the formation of a rigid and resistant hair shaft through their extensive disulfide bond cross-linking with abundant cysteine residues of hair keratins. The matrix proteins include the high-sulfur and high-glycine-tyrosine keratins. The sequence is that of Keratin-associated protein 26-1 (KRTAP26-1) from Homo sapiens (Human).